The chain runs to 172 residues: Endoribonuclease YbeY (172 aa).

Zn(2+) is bound by residues histidine 134, histidine 138, and histidine 144.

Belongs to the endoribonuclease YbeY family. Zn(2+) is required as a cofactor.

It is found in the cytoplasm. Its function is as follows. Single strand-specific metallo-endoribonuclease involved in late-stage 70S ribosome quality control and in maturation of the 3' terminus of the 16S rRNA. This chain is Endoribonuclease YbeY, found in Burkholderia cenocepacia (strain HI2424).